The sequence spans 149 residues: Sec-independent protein translocase protein TatB (149 aa).

The helical transmembrane segment at 1-21 (MFDIGFTELIVIGIVALVVVG) threads the bilayer. The interval 92 to 149 (VDMLDKSVRNEPQNAQTPPQTADAEPAQPDVRQQTLPLEEPDQNRAAGEPSSTSTRPA) is disordered. Over residues 101-111 (NEPQNAQTPPQ) the composition is skewed to polar residues.

This sequence belongs to the TatB family. In terms of assembly, the Tat system comprises two distinct complexes: a TatABC complex, containing multiple copies of TatA, TatB and TatC subunits, and a separate TatA complex, containing only TatA subunits. Substrates initially bind to the TatABC complex, which probably triggers association of the separate TatA complex to form the active translocon.

The protein resides in the cell inner membrane. Functionally, part of the twin-arginine translocation (Tat) system that transports large folded proteins containing a characteristic twin-arginine motif in their signal peptide across membranes. Together with TatC, TatB is part of a receptor directly interacting with Tat signal peptides. TatB may form an oligomeric binding site that transiently accommodates folded Tat precursor proteins before their translocation. This chain is Sec-independent protein translocase protein TatB, found in Thiobacillus denitrificans (strain ATCC 25259 / T1).